A 346-amino-acid chain; its full sequence is Annexin A1 (346 aa).

A2 carries the N-acetylalanine modification. S5 is modified (phosphoserine; by TRPM7). Q19 participates in a covalent cross-link: Isoglutamyl lysine isopeptide (Gln-Lys) (interchain with K-?). Y21 carries the phosphotyrosine; by EGFR modification. Residues 25–47 (VKGSKGGPGSAVSPYPTFNPSSD) form a disordered region. 2 positions are modified to phosphoserine: S34 and S37. Residue T41 is modified to Phosphothreonine. 4 Annexin repeats span residues 42 to 113 (FNPS…ALLK), 114 to 185 (TPAQ…SLAK), 197 to 269 (DLAD…VVVK), and 273 to 344 (SKPM…ALCG). K58 carries the post-translational modification N6-acetyllysine. Residues G59, V60, E62, K97, L100, E105, M127, G129, G131, T132, and E134 each coordinate Ca(2+). Residue T136 is modified to Phosphothreonine. D171, G210, and R213 together coordinate Ca(2+). Residue K214 forms a Glycyl lysine isopeptide (Lys-Gly) (interchain with G-Cter in SUMO1); alternate linkage. K214 is covalently cross-linked (Glycyl lysine isopeptide (Lys-Gly) (interchain with G-Cter in SUMO2); alternate). G215 is a binding site for Ca(2+). K239 is subject to N6-acetyllysine. 3 residues coordinate Ca(2+): D253, E255, and L256. K257 is covalently cross-linked (Glycyl lysine isopeptide (Lys-Gly) (interchain with G-Cter in SUMO1)). Residues E261, M286, G288, and G290 each contribute to the Ca(2+) site. The residue at position 312 (K312) is an N6-acetyllysine. Residues C324 and C343 are joined by a disulfide bond. Ca(2+) contacts are provided by L328, E330, and T331. K332 is covalently cross-linked (Glycyl lysine isopeptide (Lys-Gly) (interchain with G-Cter in SUMO1)). Residue E336 participates in Ca(2+) binding.

The protein belongs to the annexin family. Homodimer; non-covalently linked. Homodimer; linked by transglutamylation. Homodimers linked by transglutamylation are observed in placenta, but not in other tissues. Interacts with S100A11. Heterotetramer, formed by two molecules each of S100A11 and ANXA1. Interacts with DYSF. Interacts with EGFR. Phosphorylated by EGFR. Phosphorylated by protein kinase C and TRPM7. Phosphorylated in response to EGF treatment. Post-translationally, sumoylated. In terms of processing, proteolytically cleaved by cathepsin CTSG to release the active N-terminal peptide Ac2-26. As to expression, detected in lung and spleen (at protein level).

The protein localises to the nucleus. It localises to the cytoplasm. It is found in the cell projection. The protein resides in the cilium. Its subcellular location is the basolateral cell membrane. The protein localises to the lateral cell membrane. It localises to the early endosome. It is found in the cell membrane. The protein resides in the cytoplasmic vesicle membrane. Its subcellular location is the apical cell membrane. The protein localises to the membrane. It localises to the endosome. It is found in the secreted. The protein resides in the extracellular space. Its subcellular location is the extracellular exosome. The protein localises to the cytoplasmic vesicle. It localises to the secretory vesicle lumen. It is found in the phagocytic cup. Plays important roles in the innate immune response as effector of glucocorticoid-mediated responses and regulator of the inflammatory process. Has anti-inflammatory activity. Plays a role in glucocorticoid-mediated down-regulation of the early phase of the inflammatory response. Contributes to the adaptive immune response by enhancing signaling cascades that are triggered by T-cell activation, regulates differentiation and proliferation of activated T-cells. Promotes the differentiation of T-cells into Th1 cells and negatively regulates differentiation into Th2 cells. Has no effect on unstimulated T-cells. Negatively regulates hormone exocytosis via activation of the formyl peptide receptors and reorganization of the actin cytoskeleton. Has high affinity for Ca(2+) and can bind up to eight Ca(2+) ions. Displays Ca(2+)-dependent binding to phospholipid membranes. Plays a role in the formation of phagocytic cups and phagosomes. Plays a role in phagocytosis by mediating the Ca(2+)-dependent interaction between phagosomes and the actin cytoskeleton. Functionally, functions at least in part by activating the formyl peptide receptors and downstream signaling cascades. Promotes chemotaxis of granulocytes and monocytes via activation of the formyl peptide receptors. Promotes rearrangement of the actin cytoskeleton, cell polarization and cell migration. Promotes resolution of inflammation and wound healing. Acts via neutrophil N-formyl peptide receptors to enhance the release of CXCL2. This is Annexin A1 (ANXA1) from Sus scrofa (Pig).